A 274-amino-acid chain; its full sequence is Phosphatidylglycerol--prolipoprotein diacylglyceryl transferase (274 aa).

Transmembrane regions (helical) follow at residues 16 to 36, 62 to 82, 94 to 114, and 129 to 149; these read VGLH…LSSF, FALG…VLFY, IIKI…LVIW, and LSVT…ALLI. Arginine 150 provides a ligand contact to a 1,2-diacyl-sn-glycero-3-phospho-(1'-sn-glycerol). Transmembrane regions (helical) follow at residues 184-204, 213-233, and 247-267; these read VQLY…WLCY, GYSA…AEFF, and LTIG…ILWI.

The protein belongs to the Lgt family.

The protein localises to the cell inner membrane. The catalysed reaction is L-cysteinyl-[prolipoprotein] + a 1,2-diacyl-sn-glycero-3-phospho-(1'-sn-glycerol) = an S-1,2-diacyl-sn-glyceryl-L-cysteinyl-[prolipoprotein] + sn-glycerol 1-phosphate + H(+). The protein operates within protein modification; lipoprotein biosynthesis (diacylglyceryl transfer). Catalyzes the transfer of the diacylglyceryl group from phosphatidylglycerol to the sulfhydryl group of the N-terminal cysteine of a prolipoprotein, the first step in the formation of mature lipoproteins. The chain is Phosphatidylglycerol--prolipoprotein diacylglyceryl transferase from Chlamydia muridarum (strain MoPn / Nigg).